The primary structure comprises 274 residues: Thymidylate synthase (274 aa).

Arg-21 provides a ligand contact to dUMP. Position 51 (His-51) interacts with (6R)-5,10-methylene-5,6,7,8-tetrahydrofolate. Arg-123–Arg-124 lines the dUMP pocket. Catalysis depends on Cys-156, which acts as the Nucleophile. DUMP contacts are provided by residues Arg-176–Asp-179, Asn-187, and His-217–Tyr-219. A (6R)-5,10-methylene-5,6,7,8-tetrahydrofolate-binding site is contributed by Asp-179. Residue Ser-273 coordinates (6R)-5,10-methylene-5,6,7,8-tetrahydrofolate.

This sequence belongs to the thymidylate synthase family. Bacterial-type ThyA subfamily. Homodimer.

The protein resides in the cytoplasm. The catalysed reaction is dUMP + (6R)-5,10-methylene-5,6,7,8-tetrahydrofolate = 7,8-dihydrofolate + dTMP. It participates in pyrimidine metabolism; dTTP biosynthesis. Its function is as follows. Catalyzes the reductive methylation of 2'-deoxyuridine-5'-monophosphate (dUMP) to 2'-deoxythymidine-5'-monophosphate (dTMP) while utilizing 5,10-methylenetetrahydrofolate (mTHF) as the methyl donor and reductant in the reaction, yielding dihydrofolate (DHF) as a by-product. This enzymatic reaction provides an intracellular de novo source of dTMP, an essential precursor for DNA biosynthesis. The protein is Thymidylate synthase of Francisella tularensis subsp. novicida (strain U112).